A 160-amino-acid chain; its full sequence is MAKYEIMLVVRGDLDQEQANKVANELKATLKNTEVKENNYDGVQQLAYEINKLKTAYRYVYNFETTDVSLINEFRRLAIINKNVLRHIIINLEKDYGYKATVNTKKVQRNEKRAEVYARQKEEAERRAVERQAAYEAMKAEREAAGLPVKEFVKNTNSKR.

The protein belongs to the bacterial ribosomal protein bS6 family.

Binds together with bS18 to 16S ribosomal RNA. The chain is Small ribosomal subunit protein bS6 from Ureaplasma parvum serovar 3 (strain ATCC 27815 / 27 / NCTC 11736).